Consider the following 133-residue polypeptide: Binder of sperm protein homolog 1 (133 aa).

The first 20 residues, 1–20 (MAQPLDFLLVSICLFHSLFS), serve as a signal peptide directing secretion. 2 consecutive Fibronectin type-II domains span residues 40-84 (TEDG…YCAL) and 85-133 (SDYA…YCIE). 4 disulfide bridges follow: Cys45-Cys69, Cys59-Cys82, Cys90-Cys116, and Cys104-Cys131. N-linked (GlcNAc...) asparagine glycosylation occurs at Asn72.

Belongs to the seminal plasma protein family. Expressed only in the epididymis.

Its subcellular location is the secreted. Its function is as follows. Binds sperm in vitro and promotes sperm capacitation. Specifically promotes capacitation induced by high density lipoproteins (HDLs). Also binds heparin, phospholipid liposomes, and weakly to gelatin. Does not bind chondroitin sulfate B. The chain is Binder of sperm protein homolog 1 (Bsph1) from Mus musculus (Mouse).